A 58-amino-acid chain; its full sequence is Large ribosomal subunit protein bL32 (58 aa).

This sequence belongs to the bacterial ribosomal protein bL32 family.

The polypeptide is Large ribosomal subunit protein bL32 (Carboxydothermus hydrogenoformans (strain ATCC BAA-161 / DSM 6008 / Z-2901)).